A 514-amino-acid chain; its full sequence is MDKLQRDGKEDTPRQRRFLYPLLFQEDLYAIAYDHYFNRSSSFEPMENSSSNDRFSFLTVKRLISRIRQQNGSIVPFVNCDQTKLVGHNRSFYSELVLGGLTAVPEVPLSIRSKHSLERMNEWTSFRSIHSIFPLMEDKIPHSNFILDIRIPHLTHPEILVRTFRRWIQDAPSLHSLRSVLHEHRNLIISSNLDQLILIASKENTRLSLFLWNYYAYECESLLVPLWKRFFYSRSLPYESFIERTPFYRKIEHIVIFYHKYLKKSLWFLKDPSIHYVKHRERSIIALRGTYLLAKKWRYHITKFWQCHFHLWPQPYRIYIDELSNNCFSFLGYLLSVKMKTSVVRIKMPDDSFITDLITKEFDPIAPTTLLIGSLAKEKFCDISGHPISRLAWTGLTDDDILDRFDRIWRNIFHYHSGSSKKDGLYRMKYILRLPCAKTLACKHKSAIRVVRERFGSELFTKSSPKERESIFLSFSKTRSQRERIWHSDIIQINPLINSCRKKHNLQIEPLFDR.

This sequence belongs to the intron maturase 2 family. MatK subfamily.

It localises to the plastid. It is found in the chloroplast. Its function is as follows. Usually encoded in the trnK tRNA gene intron. Probably assists in splicing its own and other chloroplast group II introns. The protein is Maturase K of Encephalartos altensteinii (Altenstein's bread tree).